The primary structure comprises 428 residues: Enolase (428 aa).

Position 163 (glutamine 163) interacts with (2R)-2-phosphoglycerate. The active-site Proton donor is glutamate 205. The Mg(2+) site is built by aspartate 242, glutamate 285, and aspartate 312. (2R)-2-phosphoglycerate is bound by residues lysine 337, arginine 366, serine 367, and lysine 388. Lysine 337 serves as the catalytic Proton acceptor.

The protein belongs to the enolase family. Requires Mg(2+) as cofactor.

It is found in the cytoplasm. The protein resides in the secreted. It localises to the cell surface. The catalysed reaction is (2R)-2-phosphoglycerate = phosphoenolpyruvate + H2O. It participates in carbohydrate degradation; glycolysis; pyruvate from D-glyceraldehyde 3-phosphate: step 4/5. Functionally, catalyzes the reversible conversion of 2-phosphoglycerate (2-PG) into phosphoenolpyruvate (PEP). It is essential for the degradation of carbohydrates via glycolysis. The polypeptide is Enolase (Rhodopirellula baltica (strain DSM 10527 / NCIMB 13988 / SH1)).